The sequence spans 1409 residues: Mediator of RNA polymerase II transcription subunit 23 (1409 aa).

The disordered stretch occupies residues 1359-1409 (ASAAGQGPAQGGPQSQQPQTTGQAGGQPSVPQQQQQTQQQQPQQQQQVQQQ).

This sequence belongs to the Mediator complex subunit 23 family. In terms of assembly, component of the Mediator complex.

The protein resides in the nucleus. Component of the Mediator complex, a coactivator involved in the regulated transcription of nearly all RNA polymerase II-dependent genes. Mediator functions as a bridge to convey information from gene-specific regulatory proteins to the basal RNA polymerase II transcription machinery. Mediator is recruited to promoters by direct interactions with regulatory proteins and serves as a scaffold for the assembly of a functional preinitiation complex with RNA polymerase II and the general transcription factors. This chain is Mediator of RNA polymerase II transcription subunit 23 (MED23), found in Aedes aegypti (Yellowfever mosquito).